The sequence spans 625 residues: Clathrin interactor 1 (625 aa).

The ENTH domain maps to 16 to 149 (NVVMNYSEIE…QDDDRLREER (134 aa)). Residue Arg-29 participates in a 1,2-diacyl-sn-glycero-3-phospho-(1D-myo-inositol-4,5-bisphosphate) binding. The interaction with VTI1B stretch occupies residues 52-54 (FMY). Position 67 (Arg-67) interacts with a 1,2-diacyl-sn-glycero-3-phospho-(1D-myo-inositol-4,5-bisphosphate). 2 interaction with VTI1B regions span residues 94 to 96 (SER) and 142 to 153 (DDRLREERKKAK). Phosphoserine occurs at positions 163, 166, 173, 205, 210, 227, 245, and 299. Positions 219–331 (FRRKDREDSP…SSGDLVDLFD (113 aa)) are disordered. The segment covering 222-239 (KDREDSPERCSDSDEEKK) has biased composition (basic and acidic residues). Thr-308 carries the phosphothreonine modification. The span at 308–323 (TPQSSVKTSVPSSKSS) shows a compositional bias: low complexity. Phosphoserine is present on Ser-312. Residues 340–352 (SADLFGGFADFGS) form an interaction with AP1G1, AP1G2 and GGA2 region. Residues 368–380 (GNGDFGDWSAFNQ) form an interaction with AP1G1 and AP1G2 region. A Phosphoserine modification is found at Ser-624.

Belongs to the epsin family. As to quaternary structure, binds clathrin heavy chain and AP-2. Interacts with VTI1B. Interacts with GGA2 (via GAE domain). Interacts with AP1G1 (via GAE domain). Interacts with AP1G2 (via GAE domain). In terms of tissue distribution, ubiquitously expressed at low to intermediate levels.

It is found in the cytoplasm. It localises to the perinuclear region. Its subcellular location is the membrane. The protein localises to the cytoplasmic vesicle. The protein resides in the clathrin-coated vesicle. Functionally, binds to membranes enriched in phosphatidylinositol 4,5-bisphosphate (PtdIns(4,5)P2). May have a role in transport via clathrin-coated vesicles from the trans-Golgi network to endosomes. Stimulates clathrin assembly. This chain is Clathrin interactor 1 (CLINT1), found in Homo sapiens (Human).